Consider the following 351-residue polypeptide: uncharacterized protein (351 aa).

Residues 1–32 (MKNKKRVFIASSLSCVLLLLSAANTEANSANK) form the signal peptide. The segment at 26–74 (EANSANKDSQDQTKKEHVDKAQQKEKRNVNDKDKNTPGPDDIGKNGKVT) is disordered. Residues 33–60 (DSQDQTKKEHVDKAQQKEKRNVNDKDKN) show a composition bias toward basic and acidic residues.

It belongs to the aerolysin family.

This is an uncharacterized protein from Staphylococcus aureus (strain MRSA252).